Reading from the N-terminus, the 192-residue chain is Imidazoleglycerol-phosphate dehydratase (192 aa).

It belongs to the imidazoleglycerol-phosphate dehydratase family.

The protein localises to the cytoplasm. It catalyses the reaction D-erythro-1-(imidazol-4-yl)glycerol 3-phosphate = 3-(imidazol-4-yl)-2-oxopropyl phosphate + H2O. The protein operates within amino-acid biosynthesis; L-histidine biosynthesis; L-histidine from 5-phospho-alpha-D-ribose 1-diphosphate: step 6/9. This chain is Imidazoleglycerol-phosphate dehydratase, found in Staphylococcus saprophyticus subsp. saprophyticus (strain ATCC 15305 / DSM 20229 / NCIMB 8711 / NCTC 7292 / S-41).